A 605-amino-acid polypeptide reads, in one-letter code: DNA primase (605 aa).

The segment at 38-62 adopts a CHC2-type zinc-finger fold; it reads CPFHDEKTPSFTVSEDKQICHCFGC. Positions 260 to 341 constitute a Toprim domain; that stretch reads DEIVLLEGFM…NVFVIQLPSG (82 aa). Mg(2+) contacts are provided by Glu266, Asp310, and Asp312.

This sequence belongs to the DnaG primase family. In terms of assembly, monomer. Interacts with DnaB. Zn(2+) serves as cofactor. The cofactor is Mg(2+).

It carries out the reaction ssDNA + n NTP = ssDNA/pppN(pN)n-1 hybrid + (n-1) diphosphate.. Its function is as follows. RNA polymerase that catalyzes the synthesis of short RNA molecules used as primers for DNA polymerase during DNA replication. This is DNA primase from Staphylococcus aureus (strain Mu50 / ATCC 700699).